A 391-amino-acid polypeptide reads, in one-letter code: NADH-quinone oxidoreductase subunit D (391 aa).

It belongs to the complex I 49 kDa subunit family. As to quaternary structure, NDH-1 is composed of 14 different subunits. Subunits NuoB, C, D, E, F, and G constitute the peripheral sector of the complex.

Its subcellular location is the cell inner membrane. It carries out the reaction a quinone + NADH + 5 H(+)(in) = a quinol + NAD(+) + 4 H(+)(out). NDH-1 shuttles electrons from NADH, via FMN and iron-sulfur (Fe-S) centers, to quinones in the respiratory chain. The immediate electron acceptor for the enzyme in this species is believed to be ubiquinone. Couples the redox reaction to proton translocation (for every two electrons transferred, four hydrogen ions are translocated across the cytoplasmic membrane), and thus conserves the redox energy in a proton gradient. The polypeptide is NADH-quinone oxidoreductase subunit D (Pelagibacter ubique (strain HTCC1062)).